We begin with the raw amino-acid sequence, 168 residues long: NADH-ubiquinone oxidoreductase chain 6 (168 aa).

5 helical membrane passes run 26 to 46 (LGLM…LIIF), 52 to 72 (LLFL…ISLI), 82 to 102 (VFAY…FVMK), 111 to 131 (SMSL…IMLY), and 134 to 154 (FFCY…VVKI).

The protein belongs to the complex I subunit 6 family.

Its subcellular location is the mitochondrion membrane. The enzyme catalyses a ubiquinone + NADH + 5 H(+)(in) = a ubiquinol + NAD(+) + 4 H(+)(out). Its function is as follows. Core subunit of the mitochondrial membrane respiratory chain NADH dehydrogenase (Complex I) that is believed to belong to the minimal assembly required for catalysis. Complex I functions in the transfer of electrons from NADH to the respiratory chain. The immediate electron acceptor for the enzyme is believed to be ubiquinone. This chain is NADH-ubiquinone oxidoreductase chain 6 (ND6), found in Heterololigo bleekeri (Spear squid).